We begin with the raw amino-acid sequence, 65 residues long: UPF0434 protein bsr0601 (65 aa).

Belongs to the UPF0434 family.

In Bradyrhizobium diazoefficiens (strain JCM 10833 / BCRC 13528 / IAM 13628 / NBRC 14792 / USDA 110), this protein is UPF0434 protein bsr0601.